A 456-amino-acid polypeptide reads, in one-letter code: Acid sphingomyelinase-like phosphodiesterase 3b (456 aa).

Residues M1–A18 form the signal peptide. Zn(2+)-binding residues include D28 and H30. Residue N34 is glycosylated (N-linked (GlcNAc...) asparagine). A disulfide bridge connects residues C45 and C64. An N-linked (GlcNAc...) asparagine glycan is attached at N72. Zn(2+) is bound at residue D93. N-linked (GlcNAc...) asparagine glycosylation is present at N100. Zn(2+) is bound at residue N134. 2 N-linked (GlcNAc...) asparagine glycosylation sites follow: N164 and N223. The Zn(2+) site is built by H236, H277, and H279. Intrachain disulfides connect C405-C409 and C415-C428.

This sequence belongs to the acid sphingomyelinase family. As to quaternary structure, interacts with TLR4, TLR7, TLR8 and TLR9. Zn(2+) serves as cofactor. N-glycosylated. In terms of tissue distribution, macrophages and dendritic cells.

The protein localises to the secreted. It localises to the cell membrane. Its function is as follows. Lipid-modulating phosphodiesterase. Active on the surface of macrophages and dendritic cells and strongly influences macrophage lipid composition and membrane fluidity. Acts as a negative regulator of Toll-like receptor signaling. Has in vitro phosphodiesterase activity, but the physiological substrate is unknown. Lacks activity with phosphocholine-containing lipids, but can cleave CDP-choline, and can release phosphate from ATP and ADP (in vitro). The polypeptide is Acid sphingomyelinase-like phosphodiesterase 3b (Smpdl3b) (Mus musculus (Mouse)).